Here is a 584-residue protein sequence, read N- to C-terminus: Endoribonuclease YBEY, chloroplastic (584 aa).

The transit peptide at 1 to 50 directs the protein to the chloroplast; the sequence is MLSRVCPTLRYNRIWSAHAREMPRATLLLLQPNFFHSSPKTALVNRLDVT. Positions 240, 244, and 250 each coordinate Zn(2+).

It belongs to the endoribonuclease YbeY family. Zn(2+) is required as a cofactor.

The protein resides in the plastid. The protein localises to the chloroplast stroma. Its function is as follows. Endoribonuclease required for chloroplast ribosomal RNA (rRNA) processing and essential for normal growth and development. May be involved in maturation of both the 5' and 3' ends of 16S, 23S, and 4.5S rRNAs. Cleaves chloroplast rRNAs, mRNAs and tRNAs in vitro. In Arabidopsis thaliana (Mouse-ear cress), this protein is Endoribonuclease YBEY, chloroplastic.